We begin with the raw amino-acid sequence, 66 residues long: Beta-toxin ChFII.9 (66 aa).

One can recognise an LCN-type CS-alpha/beta domain in the interval 1-66; sequence KEGYIVDYHT…VWPLPNKRCK (66 aa). 4 disulfide bridges follow: Cys-12-Cys-65, Cys-16-Cys-41, Cys-25-Cys-46, and Cys-29-Cys-48. At Lys-66 the chain carries Lysine amide.

As to expression, expressed by the venom gland.

It is found in the secreted. Beta toxins bind voltage independently at site-4 of sodium channels (Nav) and shift the activation voltage toward more negative potentials, thereby affecting sodium channel activation CC and promoting spontaneous and repetitive firing. This Centruroides hirsutipalpus (Scorpion) protein is Beta-toxin ChFII.9.